The chain runs to 504 residues: L-carnitine/gamma-butyrobetaine antiporter (504 aa).

The next 12 membrane-spanning stretches (helical) occupy residues 10–30 (IEPK…WLTV), 51–71 (WGWA…WLVF), 92–112 (IFMM…SIEI), 143–163 (GPLP…FFFV), 195–215 (FYLV…TPLV), 231–251 (LDAI…ACGL), 263–283 (SYLS…SFIM), 316–336 (WTVF…IFLA), 347–367 (LCFG…TVLG), 398–418 (WAAL…CFIA), 446–466 (LLVR…LLAL), and 475–495 (AIIA…LSFI).

The protein belongs to the BCCT transporter (TC 2.A.15) family. CaiT subfamily. In terms of assembly, homotrimer.

It is found in the cell inner membrane. The catalysed reaction is 4-(trimethylamino)butanoate(in) + (R)-carnitine(out) = 4-(trimethylamino)butanoate(out) + (R)-carnitine(in). The protein operates within amine and polyamine metabolism; carnitine metabolism. Its function is as follows. Catalyzes the exchange of L-carnitine for gamma-butyrobetaine. The chain is L-carnitine/gamma-butyrobetaine antiporter from Escherichia coli O6:K15:H31 (strain 536 / UPEC).